The sequence spans 346 residues: Superficial pseudohyphal growth protein 1 (346 aa).

The disordered stretch occupies residues 289–308 (NFGEDEDNEEDNEDDLPDAA). Residues 291–305 (GEDEDNEEDNEDDLP) are compositionally biased toward acidic residues.

Its subcellular location is the nucleus. Its function is as follows. Probable transcription factor required for superficial pseudohyphal development in response to nitrogen starvation. The protein is Superficial pseudohyphal growth protein 1 (SFG1) of Saccharomyces cerevisiae (strain ATCC 204508 / S288c) (Baker's yeast).